The sequence spans 687 residues: Sphingoid long chain base kinase 5 (687 aa).

Positions methionine 1–glutamine 20 are disordered. Residues cysteine 91 and cysteine 94 are each lipidated (S-palmitoyl cysteine; by AKR1). Basic and acidic residues predominate over residues isoleucine 101–leucine 116. 2 disordered regions span residues isoleucine 101 to glutamine 130 and aspartate 180 to threonine 207. Residues asparagine 193–threonine 207 are compositionally biased toward low complexity. The region spanning arginine 266 to serine 405 is the DAGKc domain. ATP-binding positions include asparagine 276 to phenylalanine 278 and threonine 308. Serine 333–glycine 336 contacts substrate. Aspartate 335 serves as the catalytic Proton donor/acceptor. ATP is bound by residues glutamate 340, glycine 366–glycine 368, arginine 434, and arginine 440. Acidic residues predominate over residues glutamate 506–aspartate 524. The segment at glutamate 506–serine 525 is disordered. Residue aspartate 652–glutamate 654 coordinates ATP.

It localises to the golgi apparatus membrane. It carries out the reaction (4R)-hydroxysphinganine + ATP = (4R)-hydroxysphinganine 1-phosphate + ADP + H(+). It catalyses the reaction a sphingoid base + ATP = a sphingoid 1-phosphate + ADP + H(+). The catalysed reaction is sphinganine + ATP = sphinganine 1-phosphate + ADP + H(+). Its function is as follows. Catalyzes the phosphorylation of the sphingoid long chain bases dihydrosphingosine (DHS or sphinganine) and phytosphingosine (PHS) to form dihydrosphingosine 1-phosphate (DHS-1P) and phytosphingosine 1-phosphate (PHS-1P) respectively. Redundant to LCB4, is only responsible for few percent of the total activity. Involved in the biosynthesis of sphingolipids and ceramides. Involved in heat-induced transient cell cycle arrest. Accumulation of phosphorylated sphingoid long chain bases (LCBPs) stimulates calcium influx and activates calcineurin signaling. Involved in heat-stress resistance. This chain is Sphingoid long chain base kinase 5 (LCB5), found in Saccharomyces cerevisiae (strain ATCC 204508 / S288c) (Baker's yeast).